The chain runs to 121 residues: Large ribosomal subunit protein bL20c (121 aa).

Belongs to the bacterial ribosomal protein bL20 family.

The protein resides in the plastid. The protein localises to the chloroplast. In terms of biological role, binds directly to 23S ribosomal RNA and is necessary for the in vitro assembly process of the 50S ribosomal subunit. It is not involved in the protein synthesizing functions of that subunit. The chain is Large ribosomal subunit protein bL20c from Lotus japonicus (Lotus corniculatus var. japonicus).